The primary structure comprises 861 residues: Major vault protein (861 aa).

A2 bears the N-acetylalanine mark. MVP repeat units follow at residues 2 to 56 (ATEE…VPPR), 57 to 111 (HYCI…DITP), 112 to 164 (LQVV…EIIQ), 165 to 217 (ATVI…DLVD), 218 to 272 (AVIL…GVVP), 273 to 323 (ITTL…IQDV), 324 to 379 (YVLS…ERQA), 380 to 457 (IPLD…KTRV), and 458 to 520 (VSYR…LLGP). S421 bears the Phosphoserine mark. A Glycyl lysine isopeptide (Lys-Gly) (interchain with G-Cter in SUMO2) cross-link involves residue K444. K704 is covalently cross-linked (Glycyl lysine isopeptide (Lys-Gly) (interchain with G-Cter in SUMO2)).

In terms of assembly, the vault ribonucleoprotein particle is a huge (400 A x 670 A) cage structure of 12.9 MDa. It consists of a dimer of half-vaults, with each half-vault comprising 39 identical major vault protein (MVP) chains, PARP4 and one or more vault RNAs (vRNAs). Interacts with PTEN and activated MAPK1. The phosphorylated protein interacts with the SH2 domains of PTPN11 and SRC. Interacts with APEX1. May interact with ZNF540. Interacts with TEP1. Post-translationally, phosphorylated on Tyr residues after EGF stimulation. Dephosphorylated by PTPN11.

The protein localises to the cytoplasm. It localises to the nucleus. Functionally, required for normal vault structure. Vaults are multi-subunit structures that may act as scaffolds for proteins involved in signal transduction. Vaults may also play a role in nucleo-cytoplasmic transport. Down-regulates IFNG-mediated STAT1 signaling and subsequent activation of JAK. Down-regulates SRC activity and signaling through MAP kinases. This Mus musculus (Mouse) protein is Major vault protein (Mvp).